We begin with the raw amino-acid sequence, 56 residues long: Sex-specific storage protein 1 (56 aa).

It belongs to the hemocyanin family. As to expression, expressed in fat body and ovary.

The protein localises to the secreted. Its function is as follows. Larval storage protein (LSP) which may serve as a store of amino acids for synthesis of adult proteins. The biosynthesis, accumulation and sequestration of storage protein-1 takes place during metamorphosis and saves energy for the non-feeding pupal stage. May also be essential for egg formation. This Amsacta albistriga (Red hairy caterpillar) protein is Sex-specific storage protein 1.